The chain runs to 246 residues: Carbonic anhydrase (246 aa).

The signal sequence occupies residues 1–22 (MKTSLGKAALLALSMMPVTVFA). An Alpha-carbonic anhydrase domain is found at 23-246 (SHWSYEGEGS…QPLNGRVVIE (224 aa)). Cysteine 46 and cysteine 201 are joined by a disulfide. Histidine 84 (proton acceptor) is an active-site residue. 3 residues coordinate Zn(2+): histidine 111, histidine 113, and histidine 130. 197–198 (TT) contributes to the substrate binding site.

Belongs to the alpha-carbonic anhydrase family. The cofactor is Zn(2+).

The protein localises to the periplasm. It catalyses the reaction hydrogencarbonate + H(+) = CO2 + H2O. In terms of biological role, reversible hydration of carbon dioxide. The sequence is that of Carbonic anhydrase (cah) from Klebsiella pneumoniae.